The chain runs to 440 residues: 3-phosphoshikimate 1-carboxyvinyltransferase (440 aa).

3-phosphoshikimate-binding residues include Lys-25, Ser-26, and Arg-30. Phosphoenolpyruvate is bound at residue Lys-25. Phosphoenolpyruvate is bound by residues Gly-96 and Arg-124. 3-phosphoshikimate is bound by residues Ser-168, Gln-169, Asp-310, and Lys-337. Gln-169 contacts phosphoenolpyruvate. Catalysis depends on Asp-310, which acts as the Proton acceptor. Phosphoenolpyruvate contacts are provided by Arg-341, Arg-382, and Lys-409.

The protein belongs to the EPSP synthase family. As to quaternary structure, monomer.

The protein resides in the cytoplasm. It carries out the reaction 3-phosphoshikimate + phosphoenolpyruvate = 5-O-(1-carboxyvinyl)-3-phosphoshikimate + phosphate. Its pathway is metabolic intermediate biosynthesis; chorismate biosynthesis; chorismate from D-erythrose 4-phosphate and phosphoenolpyruvate: step 6/7. Catalyzes the transfer of the enolpyruvyl moiety of phosphoenolpyruvate (PEP) to the 5-hydroxyl of shikimate-3-phosphate (S3P) to produce enolpyruvyl shikimate-3-phosphate and inorganic phosphate. This chain is 3-phosphoshikimate 1-carboxyvinyltransferase, found in Chlamydia trachomatis serovar D (strain ATCC VR-885 / DSM 19411 / UW-3/Cx).